A 320-amino-acid polypeptide reads, in one-letter code: Serpentine receptor class gamma-17 (320 aa).

A run of 6 helical transmembrane segments spans residues 25-45 (AIYFVTACYLSVGLFCHISLL), 80-100 (IFFGRIFMYIPQLCPFVSTFF), 155-175 (FIMLILPFAGLWNIMISQVIA), 192-212 (WASLSLFQSICILTALGFTIV), 237-257 (FTSISISCTFLLVAGTQLTFA), and 268-288 (YILQFLAFDTFNVGSAIIMFL).

It belongs to the nematode receptor-like protein srg family.

It is found in the membrane. The sequence is that of Serpentine receptor class gamma-17 (srg-17) from Caenorhabditis elegans.